Consider the following 41-residue polypeptide: Large ribosomal subunit protein bL36 (41 aa).

This sequence belongs to the bacterial ribosomal protein bL36 family.

The chain is Large ribosomal subunit protein bL36 from Sinorhizobium fredii (strain NBRC 101917 / NGR234).